The sequence spans 206 residues: NKYCNIKCSKVAHTVCQYGESTKPSSKCNKVSITSVGVTEEEKKLIVDEHNRFRQKVAQGLETRGNPGPQPAASDMNNLVWNDELAYIAQVWASQCQFFVHDKCRNTAQYQVGQNIAYSASTAAYPGIVSLIVLWENEVKDFNYSQGITKENFSKVGHYTQVVWAKTKEVGCGSIKYIEKGMKSHYLVCNYGPAGNYMGQPIYTKK.

Intrachain disulfides connect Cys-4–Cys-16, Cys-8–Cys-104, Cys-28–Cys-96, and Cys-172–Cys-189. In terms of domain architecture, SCP spans 48-191 (DEHNRFRQKV…MKSHYLVCNY (144 aa)).

The protein belongs to the CRISP family. Venom allergen 5-like subfamily. As to expression, expressed by the venom gland.

It localises to the secreted. In Polybia paulista (Neotropical social wasp), this protein is Venom allergen 5 2.